We begin with the raw amino-acid sequence, 112 residues long: Photosystem II reaction center Psb28 protein (112 aa).

It belongs to the Psb28 family. As to quaternary structure, part of the photosystem II complex.

It is found in the cellular thylakoid membrane. The sequence is that of Photosystem II reaction center Psb28 protein from Synechococcus elongatus (strain ATCC 33912 / PCC 7942 / FACHB-805) (Anacystis nidulans R2).